Consider the following 255-residue polypeptide: MEMVDSCHFSPSEFFYDSSCIPSPEEGYTEDYEHGMSIYGAHKKDLEESDEDEHVRAPIGHHQAGNCLMWACKACKRKSSTTDRRKAATMRERRRLKKVNQAFETLKRCTTTNPNQRLPKVEILRNAIQYIESLQDLLREQVENYYSLPGQSCTEPGSPMSSCSDGMSDCSSPQWSGRNSSFDNVYCSDLQTSFSSTKLTLSSLDCLSSIVDRISSPQQCSLPIPDSITPSPTSSTDSLPRSPDAHDCRPIYHVL.

One can recognise a bHLH domain in the interval 83-134 (DRRKAATMRERRRLKKVNQAFETLKRCTTTNPNQRLPKVEILRNAIQYIESL). The span at 221 to 242 (SLPIPDSITPSPTSSTDSLPRS) shows a compositional bias: low complexity. Positions 221–246 (SLPIPDSITPSPTSSTDSLPRSPDAH) are disordered.

In terms of assembly, efficient DNA binding requires dimerization with another bHLH protein.

Its subcellular location is the nucleus. Functionally, acts as a transcriptional activator that promotes transcription of muscle-specific target genes and plays a role in muscle differentiation. Induces fibroblasts to differentiate into myoblasts. Probable sequence specific DNA-binding protein. The protein is Myogenic factor 5 (myf5) of Xenopus laevis (African clawed frog).